Consider the following 193-residue polypeptide: Potassium-transporting ATPase KdpC subunit (193 aa).

Residues 14–34 (ITFTFLVLCGLVYPLIVTGIA) form a helical membrane-spanning segment.

Belongs to the KdpC family. As to quaternary structure, the system is composed of three essential subunits: KdpA, KdpB and KdpC.

It is found in the cell membrane. In terms of biological role, part of the high-affinity ATP-driven potassium transport (or Kdp) system, which catalyzes the hydrolysis of ATP coupled with the electrogenic transport of potassium into the cytoplasm. This subunit acts as a catalytic chaperone that increases the ATP-binding affinity of the ATP-hydrolyzing subunit KdpB by the formation of a transient KdpB/KdpC/ATP ternary complex. The polypeptide is Potassium-transporting ATPase KdpC subunit (Bacillus cereus (strain ATCC 14579 / DSM 31 / CCUG 7414 / JCM 2152 / NBRC 15305 / NCIMB 9373 / NCTC 2599 / NRRL B-3711)).